Reading from the N-terminus, the 692-residue chain is Elongation factor G (692 aa).

The region spanning 8–282 (AKTRNIGIMA…AVIAYLPSPL (275 aa)) is the tr-type G domain. Residues 17–24 (AHVDAGKT), 81–85 (DTPGH), and 135–138 (NKMD) each bind GTP.

Belongs to the TRAFAC class translation factor GTPase superfamily. Classic translation factor GTPase family. EF-G/EF-2 subfamily.

Its subcellular location is the cytoplasm. Functionally, catalyzes the GTP-dependent ribosomal translocation step during translation elongation. During this step, the ribosome changes from the pre-translocational (PRE) to the post-translocational (POST) state as the newly formed A-site-bound peptidyl-tRNA and P-site-bound deacylated tRNA move to the P and E sites, respectively. Catalyzes the coordinated movement of the two tRNA molecules, the mRNA and conformational changes in the ribosome. This Streptococcus equi subsp. equi (strain 4047) protein is Elongation factor G.